We begin with the raw amino-acid sequence, 684 residues long: ATP-dependent zinc metalloprotease FtsH (684 aa).

The Cytoplasmic portion of the chain corresponds to 1-21 (MENKNDMFNKTPKSGKPKMFR). Residues 22–42 (FNLYWMYGLIFIMLVALYMTN) form a helical membrane-spanning segment. At 43–138 (DSSGTKELGW…QVRFEEGDDA (96 aa)) the chain is on the periplasmic side. The chain crosses the membrane as a helical span at residues 139–159 (IWNFLVSFGPIILLIGVWMFL). Residues 160–684 (MRRMSGGTGA…TEENKTGKIA (525 aa)) are Cytoplasmic-facing. ATP is bound at residue 236–243 (GPPGTGKT). Position 459 (His459) interacts with Zn(2+). The active site involves Glu460. The Zn(2+) site is built by His463 and Asp534. Residues 647–662 (EKANGKNKENADKEAE) show a composition bias toward basic and acidic residues. The interval 647–684 (EKANGKNKENADKEAEADATTENVTDTPTEENKTGKIA) is disordered.

This sequence in the central section; belongs to the AAA ATPase family. It in the C-terminal section; belongs to the peptidase M41 family. As to quaternary structure, homohexamer. Requires Zn(2+) as cofactor.

The protein localises to the cell inner membrane. Its function is as follows. Acts as a processive, ATP-dependent zinc metallopeptidase for both cytoplasmic and membrane proteins. Plays a role in the quality control of integral membrane proteins. The chain is ATP-dependent zinc metalloprotease FtsH from Parabacteroides distasonis (strain ATCC 8503 / DSM 20701 / CIP 104284 / JCM 5825 / NCTC 11152).